The chain runs to 368 residues: Glutamate 5-kinase (368 aa).

An ATP-binding site is contributed by K9. S49, D136, and N148 together coordinate substrate. ATP contacts are provided by residues 168–169 (TD) and 210–216 (TGGMMTK). The PUA domain maps to 275 to 353 (AGIITIDNGA…ADIENVLGYE (79 aa)).

Belongs to the glutamate 5-kinase family.

It localises to the cytoplasm. It carries out the reaction L-glutamate + ATP = L-glutamyl 5-phosphate + ADP. It participates in amino-acid biosynthesis; L-proline biosynthesis; L-glutamate 5-semialdehyde from L-glutamate: step 1/2. Catalyzes the transfer of a phosphate group to glutamate to form L-glutamate 5-phosphate. This chain is Glutamate 5-kinase, found in Haemophilus influenzae (strain PittEE).